A 306-amino-acid polypeptide reads, in one-letter code: Recombination-associated protein RdgC (306 aa).

The protein belongs to the RdgC family.

The protein localises to the cytoplasm. Its subcellular location is the nucleoid. In terms of biological role, may be involved in recombination. The chain is Recombination-associated protein RdgC from Pseudomonas syringae pv. tomato (strain ATCC BAA-871 / DC3000).